Reading from the N-terminus, the 411-residue chain is Tyrosine--tRNA ligase (411 aa).

Position 34 (Tyr34) interacts with L-tyrosine. The short motif at 39-48 (CTATSLHIGS) is the 'HIGH' region element. 2 residues coordinate L-tyrosine: Tyr171 and Gln175. The 'KMSKS' region motif lies at 231–235 (KMGKT). Lys234 is an ATP binding site. Positions 345 to 411 (ISAYELFYEA…GKKRHILVRV (67 aa)) constitute an S4 RNA-binding domain.

Belongs to the class-I aminoacyl-tRNA synthetase family. TyrS type 1 subfamily. As to quaternary structure, homodimer.

It localises to the cytoplasm. The enzyme catalyses tRNA(Tyr) + L-tyrosine + ATP = L-tyrosyl-tRNA(Tyr) + AMP + diphosphate + H(+). Functionally, catalyzes the attachment of tyrosine to tRNA(Tyr) in a two-step reaction: tyrosine is first activated by ATP to form Tyr-AMP and then transferred to the acceptor end of tRNA(Tyr). This chain is Tyrosine--tRNA ligase, found in Rickettsia rickettsii (strain Sheila Smith).